A 113-amino-acid chain; its full sequence is Dolichyl-diphosphooligosaccharide--protein glycosyltransferase subunit DAD1 (113 aa).

S2 bears the N-acetylserine mark. Residues 2–30 lie on the Cytoplasmic side of the membrane; sequence SASVVSVISRFLEEYLSSTPQRLKLLDAY. Residues 31–51 form a helical membrane-spanning segment; the sequence is LLYILLTGALQFGYCLLVGTF. P52 is a topological domain (lumenal). The helical transmembrane segment at 53-73 threads the bilayer; that stretch reads FNSFLSGFISCVGSFILAVCL. The Cytoplasmic segment spans residues 74-92; that stretch reads RIQINPQNKADFQGISPER. The chain crosses the membrane as a helical span at residues 93–113; that stretch reads AFADFLFASTILHLVVMNFVG.

It belongs to the DAD/OST2 family. Component of the oligosaccharyltransferase (OST) complex. OST exists in two different complex forms which contain common core subunits RPN1, RPN2, OST48, OST4, DAD1 and TMEM258, either STT3A or STT3B as catalytic subunits, and form-specific accessory subunits. STT3A complex assembly occurs through the formation of 3 subcomplexes. Subcomplex 1 contains RPN1 and TMEM258, subcomplex 2 contains the STT3A-specific subunits STT3A, DC2/OSTC, and KCP2 as well as the core subunit OST4, and subcomplex 3 contains RPN2, DAD1, and OST48. The STT3A complex can form stable complexes with the Sec61 complex or with both the Sec61 and TRAP complexes.

It localises to the endoplasmic reticulum membrane. Its pathway is protein modification; protein glycosylation. In terms of biological role, subunit of the oligosaccharyl transferase (OST) complex that catalyzes the initial transfer of a defined glycan (Glc(3)Man(9)GlcNAc(2) in eukaryotes) from the lipid carrier dolichol-pyrophosphate to an asparagine residue within an Asn-X-Ser/Thr consensus motif in nascent polypeptide chains, the first step in protein N-glycosylation. N-glycosylation occurs cotranslationally and the complex associates with the Sec61 complex at the channel-forming translocon complex that mediates protein translocation across the endoplasmic reticulum (ER). All subunits are required for a maximal enzyme activity. This chain is Dolichyl-diphosphooligosaccharide--protein glycosyltransferase subunit DAD1, found in Mus musculus (Mouse).